We begin with the raw amino-acid sequence, 644 residues long: Adhesion G-protein coupled receptor F2 (644 aa).

The signal sequence occupies residues 1 to 18; that stretch reads MIPAHWLYCLMLLLPIES. Topologically, residues 19–386 are extracellular; the sequence is CRILCQASSK…ESPVLTYITY (368 aa). N155, N219, N293, and N311 each carry an N-linked (GlcNAc...) asparagine glycan. The region spanning 233-377 is the GAIN-B domain; the sequence is SRGSLGKNFT…SILMSPNTLE (145 aa). 2 disulfides stabilise this stretch: C329–C356 and C344–C358. Residues 329–377 are GPS; the sequence is CVGWHSLESRWDWRACKTIQENSRQAVCRCRPNKLYTSFSILMSPNTLE. Residues 387–407 traverse the membrane as a helical segment; it reads IGLGISICSLIICLAIEVLVW. Topologically, residues 408 to 422 are cytoplasmic; that stretch reads SQVTKTEISYLRHLC. The helical transmembrane segment at 423–443 threads the bilayer; sequence IANIAATLLMADAWFIVASFL. The Extracellular segment spans residues 444 to 465; the sequence is SGPVLHHNGCVAATFFVHFFYL. Residues 466–486 form a helical membrane-spanning segment; that stretch reads SVFFWMLAKALLILYGILIVF. At 487 to 493 the chain is on the cytoplasmic side; that stretch reads HTLPKSC. Residues 494–514 traverse the membrane as a helical segment; that stretch reads LVASLFSVGYGCPLVIAIITL. At 515–541 the chain is on the extracellular side; that stretch reads AVTEPGKGYLRPEACWLNWDMTKALLA. A helical transmembrane segment spans residues 542 to 562; sequence FVVPALAIVVVNLITVTMVII. The Cytoplasmic portion of the chain corresponds to 563–585; it reads KTQRAAIGSSMFQEVRAIVRICK. Residues 586–606 form a helical membrane-spanning segment; the sequence is NIAILTPLLGLTWGFGIATVI. The Extracellular segment spans residues 607-610; that stretch reads NGHS. Residues 611–631 traverse the membrane as a helical segment; sequence LAFHIIFSLLNALQVSPDAAV.

Belongs to the G-protein coupled receptor 2 family. Adhesion G-protein coupled receptor (ADGR) subfamily. In terms of tissue distribution, mainly expressed in skin and heart, and very weakly in lung and spleen. Detected in all epidermal layers of skin.

It is found in the membrane. Functionally, orphan receptor. The polypeptide is Adhesion G-protein coupled receptor F2 (Adgrf2) (Mus musculus (Mouse)).